The following is a 42-amino-acid chain: Cytochrome b559 subunit beta (42 aa).

A helical membrane pass occupies residues 17-33 (WLTIHALAVPTVFFLGA). H21 is a heme binding site.

This sequence belongs to the PsbE/PsbF family. As to quaternary structure, heterodimer of an alpha subunit and a beta subunit. PSII is composed of 1 copy each of membrane proteins PsbA, PsbB, PsbC, PsbD, PsbE, PsbF, PsbH, PsbI, PsbJ, PsbK, PsbL, PsbM, PsbT, PsbX, PsbY, PsbZ, Psb30/Ycf12, at least 3 peripheral proteins of the oxygen-evolving complex and a large number of cofactors. It forms dimeric complexes. Requires heme b as cofactor.

The protein localises to the plastid. It localises to the chloroplast thylakoid membrane. Its function is as follows. This b-type cytochrome is tightly associated with the reaction center of photosystem II (PSII). PSII is a light-driven water:plastoquinone oxidoreductase that uses light energy to abstract electrons from H(2)O, generating O(2) and a proton gradient subsequently used for ATP formation. It consists of a core antenna complex that captures photons, and an electron transfer chain that converts photonic excitation into a charge separation. The polypeptide is Cytochrome b559 subunit beta (Emiliania huxleyi (Coccolithophore)).